The primary structure comprises 523 residues: MAGQRVLLLVGFLLPGVLLSEAAKILTISTVGGSHYLLMDRVSQILQDHGHNVTMLNHKRGPFMPDFKKEEKSYQVISWLAPEDHQREFKKSFDFFLEETLGGRGKFENLLNVLEYLALQCSHFLNRKDIMDSLKNENFDMVIVETFDYCPFLIAEKLGKPFVAILSTSFGSLEFGLPIPLSYVPVFRSLLTDHMDFWGRVKNFLMFFSFCRRQQHMQSTFDNTIKEHFTEGSRPVLSHLLLKAELWFINSDFAFDFARPLLPNTVYVGGLMEKPIKPVPQDLENFIAKFGDSGFVLVTLGSMVNTCQNPEIFKEMNNAFAHLPQGVIWKCQCSHWPKDVHLAANVKIVDWLPQSDLLAHPSIRLFVTHGGQNSIMEAIQHGVPMVGIPLFGDQPENMVRVEAKKFGVSIQLKKLKAETLALKMKQIMEDKRYKSAAVAASVILRSHPLSPTQRLVGWIDHVLQTGGATHLKPYVFQQPWHEQYLLDVFVFLLGLTLGTLWLCGKLLGMAVWWLRGARKVKET.

A signal peptide spans 1–22; it reads MAGQRVLLLVGFLLPGVLLSEA. Residues 23–483 are Extracellular-facing; that stretch reads AKILTISTVG…YVFQQPWHEQ (461 aa). Residue asparagine 52 is glycosylated (N-linked (GlcNAc...) asparagine). Residues 484 to 504 form a helical membrane-spanning segment; sequence YLLDVFVFLLGLTLGTLWLCG. Residues 505-523 lie on the Cytoplasmic side of the membrane; the sequence is KLLGMAVWWLRGARKVKET.

The protein belongs to the UDP-glycosyltransferase family.

Its subcellular location is the membrane. It catalyses the reaction glucuronate acceptor + UDP-alpha-D-glucuronate = acceptor beta-D-glucuronoside + UDP + H(+). Its function is as follows. UDP-glucuronosyltransferases catalyze phase II biotransformation reactions in which lipophilic substrates are conjugated with glucuronic acid to increase water solubility and enhance excretion. They are of major importance in the conjugation and subsequent elimination of potentially toxic xenobiotics and endogenous compounds. The chain is UDP-glucuronosyltransferase 3A2 (UGT3A2) from Homo sapiens (Human).